A 908-amino-acid chain; its full sequence is Glutamate receptor ionotropic, kainate 2 (908 aa).

A signal peptide spans 1-31 (MKIISPVLSNLVFSRSIKVLLCLLWIGYSQG). Topologically, residues 32–561 (TTHVLRFGGI…VFSFLNPLSP (530 aa)) are extracellular. Residues N67, N73, N275, N378, N412, N423, and N430 are each glycosylated (N-linked (GlcNAc...) asparagine). A disulfide bridge links C96 with C347. Residues P516, A518, and R523 each contribute to the L-glutamate site. N546 is a glycosylation site (N-linked (GlcNAc...) asparagine). The chain crosses the membrane as a helical span at residues 562–582 (DIWMYILLAYLGVSCVLFVIA). Residues 583 to 638 (RFSPYEWYNPHPCNPDSDVVENNFTLLNSFWFGVGALMQQGSELMPKALSTRIVGG) lie on the Cytoplasmic side of the membrane. The chain crosses the membrane as a helical span at residues 639-659 (IWWFFTLIIISSYTANLAAFL). Residues 660–819 (TVERMESPID…KEASALGVQN (160 aa)) are Extracellular-facing. The L-glutamate site is built by A689, T690, and E738. An intrachain disulfide couples C750 to C804. N751 carries an N-linked (GlcNAc...) asparagine glycan. The helical transmembrane segment at 820-840 (IGGIFIVLAAGLVLSVFVAVG) threads the bilayer. Residues 841 to 908 (EFLYKSKKNA…RRLPGKETMA (68 aa)) are Cytoplasmic-facing. A phosphoserine; by PKC mark is found at S846 and S868. K886 participates in a covalent cross-link: Glycyl lysine isopeptide (Lys-Gly) (interchain with G-Cter in SUMO1).

The protein belongs to the glutamate-gated ion channel (TC 1.A.10.1) family. GRIK2 subfamily. Homotetramer and heterotetramer with GRIK5. Tetramers may be formed by the dimerization of dimers. Assembles into a kainate-gated homomeric channel that does not bind AMPA. Can form functional heteromeric receptors with GRIK3. Forms a heteromeric complex with GRIK4 and GRIK5. Interacts with DLG4. Interacts (via C-terminus) with KLHL17 (via kelch repeats); the interaction targets GRIK2 for degradation via ubiquitin-proteasome pathway. Interacts with NETO2. In terms of processing, sumoylation mediates kainate receptor-mediated endocytosis and regulates synaptic transmission. Sumoylation is enhanced by PIAS3 and desumoylated by SENP1. Post-translationally, ubiquitinated. Ubiquitination regulates the GRIK2 levels at the synapse by leading kainate receptor degradation through proteasome. Phosphorylated by PKC at Ser-868 upon agonist activation, this directly enhance sumoylation. As to expression, expressed in the hippocampal mossy fiber synapses (at protein level). Most abundant in the cerebellum and the hypothalamus. Expressed in a proportion of dorsal root ganglion (DRG) neurons (13.6%); predominantly small diameter DRG neurons (75%) with the remainder expressed in medium diameter DRG neurons.

Its subcellular location is the cell membrane. It localises to the postsynaptic cell membrane. The enzyme catalyses Ca(2+)(in) = Ca(2+)(out). The catalysed reaction is Na(+)(in) = Na(+)(out). With respect to regulation, cold receptor activity activated by temperatures between 10-19 degrees Celsius. Functionally, ionotropic glutamate receptor that functions as a cation-permeable ligand-gated ion channel, gated by L-glutamate and the glutamatergic agonist kainic acid. L-glutamate acts as an excitatory neurotransmitter at many synapses in the central nervous system. Binding of the excitatory neurotransmitter L-glutamate induces a conformation change, leading to the opening of the cation channel, and thereby converts the chemical signal to an electrical impulse. The receptor then desensitizes rapidly and enters a transient inactive state, characterized by the presence of bound agonist. Modulates cell surface expression of NETO2. In association with GRIK3, involved in presynaptic facilitation of glutamate release at hippocampal mossy fiber synapses. Independent of its ionotropic glutamate receptor activity, acts as a thermoreceptor conferring sensitivity to cold temperatures. Functions in dorsal root ganglion neurons. Its function is as follows. Ionotropic glutamate receptor that functions as a cation-permeable ligand-gated ion channel, gated by L-glutamate and the glutamatergic agonist kainic acid. The chain is Glutamate receptor ionotropic, kainate 2 (Grik2) from Mus musculus (Mouse).